The primary structure comprises 502 residues: UTP--glucose-1-phosphate uridylyltransferase 2 (502 aa).

The interval 1–20 (MMKPDLNSPLPQSPQLQAFG) is disordered. The segment covering 9–20 (PLPQSPQLQAFG) has biased composition (polar residues). UTP is bound by residues 114-117 (LNGG), Lys128, Gln191, and Gly220. 116-117 (GG) lines the substrate pocket. Substrate contacts are provided by residues His221 and 249–251 (NVD). UTP is bound by residues Asp251 and Lys390.

This sequence belongs to the UDPGP type 1 family.

The enzyme catalyses alpha-D-glucose 1-phosphate + UTP + H(+) = UDP-alpha-D-glucose + diphosphate. Plays a central role as a glucosyl donor in cellular metabolic pathways. The chain is UTP--glucose-1-phosphate uridylyltransferase 2 (ugpB) from Dictyostelium discoideum (Social amoeba).